Consider the following 243-residue polypeptide: 3-deoxy-manno-octulosonate cytidylyltransferase (243 aa).

It belongs to the KdsB family.

It is found in the cytoplasm. It catalyses the reaction 3-deoxy-alpha-D-manno-oct-2-ulosonate + CTP = CMP-3-deoxy-beta-D-manno-octulosonate + diphosphate. It participates in nucleotide-sugar biosynthesis; CMP-3-deoxy-D-manno-octulosonate biosynthesis; CMP-3-deoxy-D-manno-octulosonate from 3-deoxy-D-manno-octulosonate and CTP: step 1/1. The protein operates within bacterial outer membrane biogenesis; lipopolysaccharide biosynthesis. In terms of biological role, activates KDO (a required 8-carbon sugar) for incorporation into bacterial lipopolysaccharide in Gram-negative bacteria. The sequence is that of 3-deoxy-manno-octulosonate cytidylyltransferase from Helicobacter pylori (strain P12).